A 147-amino-acid chain; its full sequence is Peptidyl-lysine N-acetyltransferase YjaB (147 aa).

The N-acetyltransferase domain maps to 3–144; that stretch reads ISIRRSRHEE…KPYPLLNLAY (142 aa).

It belongs to the acetyltransferase family.

It carries out the reaction L-lysyl-[protein] + acetyl-CoA = N(6)-acetyl-L-lysyl-[protein] + CoA + H(+). N-epsilon-lysine acetyltransferase that catalyzes acetylation of a large number of proteins. Binds acetyl-CoA. This Escherichia coli (strain K12) protein is Peptidyl-lysine N-acetyltransferase YjaB (yjaB).